The chain runs to 484 residues: Protein nucleotidyltransferase YdiU (484 aa).

The ATP site is built by G87, G89, R90, K110, D122, G123, R173, and R180. The active-site Proton acceptor is D249. Mg(2+)-binding residues include N250 and D259. Position 259 (D259) interacts with ATP.

Belongs to the SELO family. Mg(2+) serves as cofactor. Mn(2+) is required as a cofactor.

The catalysed reaction is L-seryl-[protein] + ATP = 3-O-(5'-adenylyl)-L-seryl-[protein] + diphosphate. It carries out the reaction L-threonyl-[protein] + ATP = 3-O-(5'-adenylyl)-L-threonyl-[protein] + diphosphate. It catalyses the reaction L-tyrosyl-[protein] + ATP = O-(5'-adenylyl)-L-tyrosyl-[protein] + diphosphate. The enzyme catalyses L-histidyl-[protein] + UTP = N(tele)-(5'-uridylyl)-L-histidyl-[protein] + diphosphate. The catalysed reaction is L-seryl-[protein] + UTP = O-(5'-uridylyl)-L-seryl-[protein] + diphosphate. It carries out the reaction L-tyrosyl-[protein] + UTP = O-(5'-uridylyl)-L-tyrosyl-[protein] + diphosphate. Nucleotidyltransferase involved in the post-translational modification of proteins. It can catalyze the addition of adenosine monophosphate (AMP) or uridine monophosphate (UMP) to a protein, resulting in modifications known as AMPylation and UMPylation. This is Protein nucleotidyltransferase YdiU from Alcanivorax borkumensis (strain ATCC 700651 / DSM 11573 / NCIMB 13689 / SK2).